Reading from the N-terminus, the 260-residue chain is Deoxycytidine kinase (260 aa).

A phosphoserine; by CK1 mark is found at serine 11 and serine 15. 28 to 36 serves as a coordination point for ATP; it reads GNIAAGKST. Residue glutamate 53 coordinates substrate. Residue threonine 72 is modified to Phosphothreonine; by CK1. The residue at position 74 (serine 74) is a Phosphoserine; by CK1. Tyrosine 86 and glutamine 97 together coordinate substrate. Catalysis depends on glutamate 127, which acts as the Proton acceptor. Positions 128 and 133 each coordinate substrate. An ATP-binding site is contributed by 188 to 192; sequence RIYLR. Glutamate 197 lines the substrate pocket. 240–242 provides a ligand contact to ATP; it reads EDF.

Belongs to the DCK/DGK family. Homodimer. Post-translationally, phosphorylated and activated in vitro upon phosphorylation at Ser-74 by CSNK1D/CK1.

The protein resides in the nucleus. It carries out the reaction 2'-deoxycytidine + a ribonucleoside 5'-triphosphate = dCMP + a ribonucleoside 5'-diphosphate + H(+). The enzyme catalyses 2'-deoxyadenosine + ATP = dAMP + ADP + H(+). It catalyses the reaction 2'-deoxyguanosine + ATP = dGMP + ADP + H(+). Its function is as follows. Phosphorylates the deoxyribonucleosides deoxycytidine, deoxyguanosine and deoxyadenosine. The protein is Deoxycytidine kinase (DCK) of Bos taurus (Bovine).